Consider the following 350-residue polypeptide: Protein-arginine kinase (350 aa).

Residues 21 to 253 (IVISSRIRLA…VRLADQEREA (233 aa)) enclose the Phosphagen kinase C-terminal domain. Residues 24–28 (SSRIR), histidine 90, arginine 124, 175–179 (RASTM), and 206–211 (RGLYGE) contribute to the ATP site. The RDXXRA motif of the pArg binding pocket involved in allosteric regulation motif lies at 336 to 341 (RDVHRA).

This sequence belongs to the ATP:guanido phosphotransferase family.

It carries out the reaction L-arginyl-[protein] + ATP = N(omega)-phospho-L-arginyl-[protein] + ADP + H(+). Its activity is regulated as follows. Appears to be allosterically activated by the binding of pArg-containing polypeptides to the pArg-binding pocket localized in the C-terminal domain of McsB. Its function is as follows. Catalyzes the specific phosphorylation of arginine residues in proteins. In Moorella thermoacetica (strain ATCC 39073 / JCM 9320), this protein is Protein-arginine kinase.